A 221-amino-acid polypeptide reads, in one-letter code: Iron-sulfur cluster repair protein YtfE (221 aa).

It belongs to the RIC family. YtfE subfamily. As to quaternary structure, homodimer.

It localises to the cytoplasm. Di-iron-containing protein involved in the repair of iron-sulfur clusters damaged by oxidative and nitrosative stress conditions. In Pectobacterium atrosepticum (strain SCRI 1043 / ATCC BAA-672) (Erwinia carotovora subsp. atroseptica), this protein is Iron-sulfur cluster repair protein YtfE.